The sequence spans 492 residues: Cysteine--tRNA ligase (492 aa).

Zn(2+) is bound at residue cysteine 35. A 'HIGH' region motif is present at residues 37–47 (PTVYSNVHLGN). Zn(2+) contacts are provided by cysteine 230, histidine 255, and glutamate 259. The 'KMSKS' region motif lies at 287 to 291 (KMAKS). Lysine 290 contributes to the ATP binding site.

The protein belongs to the class-I aminoacyl-tRNA synthetase family. In terms of assembly, monomer. It depends on Zn(2+) as a cofactor.

Its subcellular location is the cytoplasm. It catalyses the reaction tRNA(Cys) + L-cysteine + ATP = L-cysteinyl-tRNA(Cys) + AMP + diphosphate. This is Cysteine--tRNA ligase from Flavobacterium johnsoniae (strain ATCC 17061 / DSM 2064 / JCM 8514 / BCRC 14874 / CCUG 350202 / NBRC 14942 / NCIMB 11054 / UW101) (Cytophaga johnsonae).